The primary structure comprises 303 residues: Golgi to ER traffic protein 2 (303 aa).

At 1–168 the chain is on the cytoplasmic side; it reads MSEQPLSQDE…NAYNIYQQRL (168 aa). Residues 19 to 86 form a disordered region; it reads RQAKMARGKA…DPEDDPDLMD (68 aa). Over residues 31-48 the composition is skewed to polar residues; that stretch reads RLNNILSQGSSVKGTTDP. Residues 169 to 189 traverse the membrane as a helical segment; sequence WKFRFSIIRFAAVLTNFFYHY. The Lumenal portion of the chain corresponds to 190 to 216; it reads LTIQDYSFTSSPHFYVRALAPHPAVNS. A helical transmembrane segment spans residues 217–236; it reads FITWFSTCEVAILASFYLIT. The Cytoplasmic portion of the chain corresponds to 237–280; the sequence is SKNNIYANASDGNLLLKGISMGAMVLPQLRAYQPLVIRLAHYWE. The chain crosses the membrane as a helical span at residues 281 to 301; the sequence is VFSMLLGDIFLVVVLFGLVSI. The Lumenal portion of the chain corresponds to 302–303; it reads YN.

This sequence belongs to the GET2 family. As to quaternary structure, component of the Golgi to ER traffic (GET) complex, which is composed of GET1, GET2 and GET3. Within the complex, GET1 and GET2 form a heterotetramer which is stabilized by phosphatidylinositol binding and which binds to the GET3 homodimer.

Its subcellular location is the endoplasmic reticulum membrane. It localises to the golgi apparatus membrane. Required for the post-translational delivery of tail-anchored (TA) proteins to the endoplasmic reticulum. Together with GET1, acts as a membrane receptor for soluble GET3, which recognizes and selectively binds the transmembrane domain of TA proteins in the cytosol. The GET complex cooperates with the HDEL receptor ERD2 to mediate the ATP-dependent retrieval of resident ER proteins that contain a C-terminal H-D-E-L retention signal from the Golgi to the ER. This Debaryomyces hansenii (strain ATCC 36239 / CBS 767 / BCRC 21394 / JCM 1990 / NBRC 0083 / IGC 2968) (Yeast) protein is Golgi to ER traffic protein 2.